A 325-amino-acid polypeptide reads, in one-letter code: MVRGVEQGGPAMDESSSSSSPSPVSAPAGQAAMTAGGIATVAAVLIVFAALTLAFVLLQCYCDERRRAVTTTSTSGRGRRPRPRRRSGSGGDGGTGGGVDPEVLRSLPVTVYSRSTAAAAAKEEEEEDDDGVECAVCLAELEDGEEARFLPRCGHGFHAECVDMWLGSHSTCPLCRLTVVVPPPPLPPVPPEPPASYTVSLPASVLLGLSDHGAGAVTMTAEGRSTLVIEIPESAASTTPRDAAARSSPSLARLRSLRRLWSFGRQGAAGSTSSCSCATGGDNDDGDVEHGVSVTVAIRAVEAATPARPPEAEAGARTAAAHVRN.

Positions 1 to 29 (MVRGVEQGGPAMDESSSSSSPSPVSAPAG) are disordered. Low complexity predominate over residues 15–28 (SSSSSSPSPVSAPA). A helical membrane pass occupies residues 38–58 (IATVAAVLIVFAALTLAFVLL). Residues 70–105 (TTTSTSGRGRRPRPRRRSGSGGDGGTGGGVDPEVLR) are disordered. Basic residues predominate over residues 77-87 (RGRRPRPRRRS). The span at 88–99 (GSGGDGGTGGGV) shows a compositional bias: gly residues. The RING-type; atypical zinc finger occupies 134–176 (CAVCLAELEDGEEARFLPRCGHGFHAECVDMWLGSHSTCPLCR). Disordered stretches follow at residues 267-289 (GAAG…GDVE) and 303-325 (AATP…HVRN). A compositionally biased stretch (low complexity) spans 268–281 (AAGSTSSCSCATGG).

It is found in the cell membrane. The catalysed reaction is S-ubiquitinyl-[E2 ubiquitin-conjugating enzyme]-L-cysteine + [acceptor protein]-L-lysine = [E2 ubiquitin-conjugating enzyme]-L-cysteine + N(6)-ubiquitinyl-[acceptor protein]-L-lysine.. It functions in the pathway protein modification; protein ubiquitination. Functions as an E3 ubiquitin-protein ligase in cooperation with the E2 ubiquitin conjugating enzymes UBC5A and UBC5B. Involved in root development. Required for the maintenance of cell viability after the initiation of root primordial formation. May mediate the degradation of cytotoxic proteins produced in root cells after the actions of auxin, cytokinin and jasmonic acid. Mediates 'Lys-48'-linked polyubiquitination of MBP in vitro. The protein is E3 ubiquitin-protein ligase EL5 (EL5.1) of Oryza sativa subsp. japonica (Rice).